Here is a 329-residue protein sequence, read N- to C-terminus: Tyrosine--tRNA ligase (329 aa).

L-tyrosine-binding residues include Y31, Y157, Q161, D164, and Q179. The short motif at 220 to 224 (KMSKS) is the 'KMSKS' region element. K223 contacts ATP.

This sequence belongs to the class-I aminoacyl-tRNA synthetase family. TyrS type 4 subfamily. Homodimer.

It localises to the cytoplasm. It carries out the reaction tRNA(Tyr) + L-tyrosine + ATP = L-tyrosyl-tRNA(Tyr) + AMP + diphosphate + H(+). Its function is as follows. Catalyzes the attachment of tyrosine to tRNA(Tyr) in a two-step reaction: tyrosine is first activated by ATP to form Tyr-AMP and then transferred to the acceptor end of tRNA(Tyr). In Picrophilus torridus (strain ATCC 700027 / DSM 9790 / JCM 10055 / NBRC 100828 / KAW 2/3), this protein is Tyrosine--tRNA ligase.